An 875-amino-acid polypeptide reads, in one-letter code: Leucine--tRNA ligase (875 aa).

Positions 43 to 53 (PYPSGRIHIGH) match the 'HIGH' region motif. Residues 631 to 635 (KMSKS) carry the 'KMSKS' region motif. K634 is an ATP binding site.

Belongs to the class-I aminoacyl-tRNA synthetase family.

It is found in the cytoplasm. It carries out the reaction tRNA(Leu) + L-leucine + ATP = L-leucyl-tRNA(Leu) + AMP + diphosphate. The protein is Leucine--tRNA ligase of Mesorhizobium japonicum (strain LMG 29417 / CECT 9101 / MAFF 303099) (Mesorhizobium loti (strain MAFF 303099)).